The primary structure comprises 401 residues: Tumor necrosis factor receptor superfamily member 11B (401 aa).

The first 21 residues, 1–21 (MNNLLCCALVFLDISIKWTTQ), serve as a signal peptide directing secretion. TNFR-Cys repeat units lie at residues 24–62 (FPPK…KTVC), 65–105 (CPDH…NRVC), 107–142 (CKEG…NTVC), and 145–185 (CPDG…DNIC). Intrachain disulfides connect cysteine 41/cysteine 54, cysteine 44/cysteine 62, cysteine 65/cysteine 80, cysteine 83/cysteine 97, cysteine 87/cysteine 105, cysteine 107/cysteine 118, cysteine 124/cysteine 142, and cysteine 145/cysteine 160. N-linked (GlcNAc...) asparagine glycosylation occurs at asparagine 98. 3 N-linked (GlcNAc...) asparagine glycosylation sites follow: asparagine 152, asparagine 165, and asparagine 178. An intrachain disulfide couples cysteine 166 to cysteine 185. 2 Death domains span residues 198–269 (DVTL…IVKK) and 270–365 (IIQD…TQSL). An N-linked (GlcNAc...) asparagine glycan is attached at asparagine 289.

As to quaternary structure, homodimer. Interacts with TNFSF10 and TNFSF11. N-glycosylated. Contains sialic acid residues. Post-translationally, the N-terminus is blocked. As to expression, highly expressed in adult lung, heart, kidney, liver, spleen, thymus, prostate, ovary, small intestine, thyroid, lymph node, trachea, adrenal gland, testis, and bone marrow. Detected at very low levels in brain, placenta and skeletal muscle. Highly expressed in fetal kidney, liver and lung.

The protein localises to the secreted. Functionally, acts as a decoy receptor for TNFSF11/RANKL and thereby neutralizes its function in osteoclastogenesis. Inhibits the activation of osteoclasts and promotes osteoclast apoptosis in vitro. Bone homeostasis seems to depend on the local ratio between TNFSF11 and TNFRSF11B. May also play a role in preventing arterial calcification. May act as decoy receptor for TNFSF10/TRAIL and protect against apoptosis. TNFSF10/TRAIL binding blocks the inhibition of osteoclastogenesis. This is Tumor necrosis factor receptor superfamily member 11B (TNFRSF11B) from Homo sapiens (Human).